We begin with the raw amino-acid sequence, 229 residues long: Ribonuclease 3 (229 aa).

Positions Leu-5–Gly-127 constitute an RNase III domain. Glu-40 contributes to the Mg(2+) binding site. Asp-44 is a catalytic residue. Residues Asp-113 and Glu-116 each coordinate Mg(2+). Glu-116 is a catalytic residue. In terms of domain architecture, DRBM spans Asp-154–Val-224.

It belongs to the ribonuclease III family. As to quaternary structure, homodimer. It depends on Mg(2+) as a cofactor.

It localises to the cytoplasm. The enzyme catalyses Endonucleolytic cleavage to 5'-phosphomonoester.. Digests double-stranded RNA. Involved in the processing of primary rRNA transcript to yield the immediate precursors to the large and small rRNAs (23S and 16S). Processes some mRNAs, and tRNAs when they are encoded in the rRNA operon. Processes pre-crRNA and tracrRNA of type II CRISPR loci if present in the organism. The protein is Ribonuclease 3 of Pseudomonas syringae pv. syringae (strain B728a).